Here is a 343-residue protein sequence, read N- to C-terminus: MSAFTPASEVLLRHSDDFEQSRILFAGDLQDDLPARLDTAASRAHTQQFHHWQVLSRQMGDNARFSLVATADDVADCNTLIYYWPKNKPEAQFQLMNLLSLLPVGTDIFVVGENRSGVRSAEQMLADYAPLNKVDSARRCGLYFGRLEKQPEFDADKFWGEYSVDGLTVKTLPGVFSRDGLDVGSQLLLSTLTPHTKGKVLDVGCGAGVLSVAFARHSPKIRLTLCDVSAPAVEASRATLAANGVEGEVFASNVFSEVKGRFDMIISNPPFHDGMQTSLDAAQTLIRGAVRHLNSGGELRIVANAFLPYPDVLDETFGFHEVIAQTGRFKVYRAIMTRQAKKG.

The protein belongs to the methyltransferase superfamily. RsmC family. In terms of assembly, monomer.

The protein resides in the cytoplasm. The enzyme catalyses guanosine(1207) in 16S rRNA + S-adenosyl-L-methionine = N(2)-methylguanosine(1207) in 16S rRNA + S-adenosyl-L-homocysteine + H(+). Specifically methylates the guanine in position 1207 of 16S rRNA in the 30S particle. This is Ribosomal RNA small subunit methyltransferase C from Escherichia coli O17:K52:H18 (strain UMN026 / ExPEC).